Consider the following 317-residue polypeptide: Exopolysaccharide production protein ExoZ (317 aa).

The next 7 membrane-spanning stretches (helical) occupy residues 14–34 (TIGAAGVDVFFVISGFIMWVI), 53–73 (IVPVYWLATGVMVAGALAGLF), 100–120 (IWPVLVQGWTLNFEMLFYAVF), 132–152 (LPVVSGLFLALVIAGRVVAFD), 185–205 (LAVGSALFACSLGGFALIGVL), 206–226 (GLPFDELTTGPLAVLLVIGVL), and 268–288 (IGLGAPATMFAAVLSGTLIGI).

This sequence belongs to the acyltransferase 3 family.

The protein resides in the cell membrane. In terms of biological role, required for the acetyl modification of the third sugar (glucose) of the octasaccharide subunit of succinoglycan (EPS I). This Rhizobium meliloti (strain 1021) (Ensifer meliloti) protein is Exopolysaccharide production protein ExoZ (exoZ).